A 297-amino-acid polypeptide reads, in one-letter code: N-acetylneuraminate lyase (297 aa).

The aceneuramate site is built by serine 47 and threonine 48. The active-site Proton donor is tyrosine 137. Lysine 165 (schiff-base intermediate with substrate) is an active-site residue. Aceneuramate is bound by residues threonine 167, glycine 189, aspartate 191, glutamate 192, and serine 208.

Belongs to the DapA family. NanA subfamily. In terms of assembly, homotetramer.

The protein resides in the cytoplasm. It carries out the reaction aceneuramate = aldehydo-N-acetyl-D-mannosamine + pyruvate. It participates in amino-sugar metabolism; N-acetylneuraminate degradation; D-fructose 6-phosphate from N-acetylneuraminate: step 1/5. Catalyzes the reversible aldol cleavage of N-acetylneuraminic acid (sialic acid; Neu5Ac) to form pyruvate and N-acetylmannosamine (ManNAc) via a Schiff base intermediate. This chain is N-acetylneuraminate lyase, found in Escherichia coli (strain SMS-3-5 / SECEC).